The chain runs to 685 residues: Amino acid transporter heavy chain SLC3A1 (685 aa).

Residues 1-10 (MDEDKGKRDP) show a composition bias toward basic and acidic residues. Residues 1–53 (MDEDKGKRDPIQMSLKGCRTNNGFVQNEDIPEQDPDPGSRDTPQPNAVSIPAP) form a disordered region. Over 1-88 (MDEDKGKRDP…ARYRVPREIL (88 aa)) the chain is Cytoplasmic. The chain crosses the membrane as a helical; Signal-anchor for type II membrane protein span at residues 89–109 (FWLTVVSVFLLIGATIAIIVI). At 110–685 (SPKCLDWWQA…SALDILYSSC (576 aa)) the chain is on the extracellular side. N213 is a Ca(2+) binding site. N-linked (GlcNAc...) asparagine glycosylation is found at N213, N240, and N260. A disulfide bond links C241 and C272. The Ca(2+) site is built by D283, F317, L318, and E320. The N-linked (GlcNAc...) asparagine glycan is linked to N331. The residue at position 385 (S385) is a Phosphoserine. N-linked (GlcNAc...) asparagine glycosylation is found at N512 and N522. Disulfide bonds link C570-C666 and C673-C685.

Disulfide-linked heterodimer composed of the catalytic light subunit SLC7A9 and the heavy subunit SLC3A1. The heterodimer is the minimal functional unit. Assembles in non-covalently linked heterotetramers (dimers of heterodimers) and higher order oligomers; the oligomerization is mediated by SLC3A1 likely to prevent degradation in the endoplasmic reticulum and facilitate heteromer trafficking to the plasma membrane. Disulfide-linked heterodimer composed of the catalytic light subunit SLC7A13 and the heavy subunit SLC3A1. In terms of tissue distribution, expressed in the brush border membrane in the kidney (at protein level). Highly expressed in renal tubules in the outer stripe of the outer medulla and medullary ray (at protein level). Also detected in the renal cortex. More abundant in male than female kidneys.

The protein localises to the cell membrane. The protein resides in the apical cell membrane. Acts as a chaperone that facilitates biogenesis and trafficking of functional transporter heteromers to the plasma membrane. Associates with SLC7A9 to form a functional transporter complex that mediates the electrogenic exchange between cationic amino acids and neutral amino acids, with a stoichiometry of 1:1. SLC7A9-SLC3A1 transporter has system b(0,+)-like activity with high affinity for extracellular cationic amino acids and L-cystine and lower affinity for intracellular neutral amino acids. Substrate exchange is driven by high concentration of intracellular neutral amino acids and the intracellular reduction of L-cystine to L-cysteine. SLC7A9-SLC3A1 acts as a major transporter for reabsorption of L-cystine and dibasic amino acids across the brush border membrane in early proximal tubules. Associates with SLC7A13 to form a functional complex that transports anionic and neutral amino acids via exchange or facilitated diffusion. SLC7A13-SLC3A1 may act as a major transporter for L-cystine in late proximal tubules, ensuring its reabsorption from the luminal fluid in exchange for cytosolic L-glutamate or L-aspartate. The chain is Amino acid transporter heavy chain SLC3A1 from Mus musculus (Mouse).